The chain runs to 309 residues: Tagatose-6-phosphate kinase (309 aa).

This sequence belongs to the carbohydrate kinase PfkB family. LacC subfamily.

It catalyses the reaction D-tagatofuranose 6-phosphate + ATP = D-tagatofuranose 1,6-bisphosphate + ADP + H(+). It participates in carbohydrate metabolism; D-tagatose 6-phosphate degradation; D-glyceraldehyde 3-phosphate and glycerone phosphate from D-tagatose 6-phosphate: step 1/2. This Streptococcus pyogenes serotype M6 (strain ATCC BAA-946 / MGAS10394) protein is Tagatose-6-phosphate kinase.